Consider the following 601-residue polypeptide: MQNDRKKHTRNFSIVAHIDHGKSTLADRLLEATGTLTQREMENQVLDKMELEKERGITIKSQAARLVYKRDDGEEYILNLIDTPGHVDFNYEVSRSLAACEGAILVVDATQGIQAQTLANCYLALDHDLEIVPVINKIDLPSARPDEVKEEIEDVIGIEAHDAPLVSAKTGLNIKDVLEAIVEKVPVPDGDEEAPLKALIFDSYYDSYKGVVCYVRIKDGVVKPGTKIKFMATNKEYEVTETGIFTPNFFPMKELRAGDVGYITASIKNLRDAGVGDTITEASRPAKEPLEGYRPAIPMVYSGIYPVDGAKYEELKEALEKLKLNDAALSYEPETSIALGFGFRCGFLGLLHMEIIQERIEREFNLDIITTAPSVIYNIYKRDGEMLKITNPTNMPDPTEIEKMEEPVVKASIITPSDFVGAVMELCQNKRGTFIDMEYIETTRVVVNYYIPLNEIIYDFFDMLKSKTKGYASLDYELNGYKQAKLVKLDMLLNGDVVDALSMIVPEERAYNKGRAIAEKLKEVIPRQMFEIPIQAAVGAKIIARETVKAMRKDVLAKCYGGDISRKRKLLEKQKEGKKRMRQIGSVEVPQEAFMSILKVD.

One can recognise a tr-type G domain in the interval 7-189 (KHTRNFSIVA…AIVEKVPVPD (183 aa)). Residues 19 to 24 (DHGKST) and 136 to 139 (NKID) each bind GTP.

Belongs to the TRAFAC class translation factor GTPase superfamily. Classic translation factor GTPase family. LepA subfamily.

It is found in the cell membrane. The catalysed reaction is GTP + H2O = GDP + phosphate + H(+). Functionally, required for accurate and efficient protein synthesis under certain stress conditions. May act as a fidelity factor of the translation reaction, by catalyzing a one-codon backward translocation of tRNAs on improperly translocated ribosomes. Back-translocation proceeds from a post-translocation (POST) complex to a pre-translocation (PRE) complex, thus giving elongation factor G a second chance to translocate the tRNAs correctly. Binds to ribosomes in a GTP-dependent manner. This Clostridium novyi (strain NT) protein is Elongation factor 4.